The sequence spans 489 residues: Aklavinone 12-hydroxylase DnrF (489 aa).

FAD is bound by residues 17-18, Glu37, Gln121, and Leu145; that span reads LG. Tyr224 serves as the catalytic Proton acceptor. Asp308 serves as a coordination point for FAD. Gly317 is a binding site for aklavinone. Residues 402 to 428 form a disordered region; it reads VAAEDDDPEPTEDPRRPSGRPGFRAPH.

It belongs to the PheA/TfdB FAD monooxygenase family. In terms of assembly, monomer. Requires FAD as cofactor.

The catalysed reaction is aklavinone + NADPH + O2 + H(+) = epsilon-rhodomycinone + NADP(+) + H2O. The protein operates within antibiotic biosynthesis; daunorubicin biosynthesis. Its pathway is antibiotic biosynthesis; carminomycin biosynthesis. It functions in the pathway antibiotic biosynthesis; rhodomycin biosynthesis. It participates in antibiotic biosynthesis; doxorubicin biosynthesis. Its function is as follows. Involved in the biosynthesis of the anthracyclines carminomycin, rhodomycin, daunorubicin (daunomycin) and doxorubicin (adriamycin) which are aromatic polyketide antibiotics that exhibit high cytotoxicity and are widely applied in the chemotherapy of a variety of cancers. Catalyzes the incorporation of a hydroxyl group at position C-11 of aklavinone, resulting in epsilon-rhodomycinone. The protein is Aklavinone 12-hydroxylase DnrF (dnrF) of Streptomyces peucetius subsp. caesius.